Consider the following 148-residue polypeptide: Snaclec stejaggregin-A subunit beta-2 (148 aa).

The signal sequence occupies residues 1–23 (MGQFIFVSFGLLVVLLSLSGAGA). A disulfide bond links Cys-27 and Cys-38. Positions 34–145 (YDLYCYKVFK…CSRTHYVVCK (112 aa)) constitute a C-type lectin domain. 2 N-linked (GlcNAc...) asparagine glycosylation sites follow: Asn-47 and Asn-78. 2 disulfide bridges follow: Cys-55-Cys-144 and Cys-121-Cys-136.

The protein belongs to the snaclec family. Heteromultimer; disulfide-linked. As to expression, expressed by the venom gland.

The protein resides in the secreted. In terms of biological role, interferes with one step of hemostasis (modulation of platelet aggregation, or coagulation cascade, for example). This is Snaclec stejaggregin-A subunit beta-2 from Trimeresurus stejnegeri (Chinese green tree viper).